The primary structure comprises 792 residues: Phenylalanine--tRNA ligase beta subunit (792 aa).

The tRNA-binding domain occupies 39 to 147; the sequence is ARTLEKVVVG…ADAPIGKNIQ (109 aa). In terms of domain architecture, B5 spans 400-475; the sequence is PKIPRIILRP…HLYGYDRIPQ (76 aa). The Mg(2+) site is built by D453, D459, E462, and E463. Positions 697–791 constitute an FDX-ACB domain; the sequence is SKFPSIRRDI…LERKFNAKLR (95 aa).

The protein belongs to the phenylalanyl-tRNA synthetase beta subunit family. Type 1 subfamily. In terms of assembly, tetramer of two alpha and two beta subunits. Requires Mg(2+) as cofactor.

Its subcellular location is the cytoplasm. The enzyme catalyses tRNA(Phe) + L-phenylalanine + ATP = L-phenylalanyl-tRNA(Phe) + AMP + diphosphate + H(+). The polypeptide is Phenylalanine--tRNA ligase beta subunit (Coxiella burnetii (strain RSA 493 / Nine Mile phase I)).